The chain runs to 468 residues: GTPase Der (468 aa).

2 consecutive EngA-type G domains span residues 3–167 (PTLV…PYAE) and 179–352 (PVIA…TAAM). Residues 9–16 (GRPNVGKS), 56–60 (DTGGF), 119–122 (NKAE), 185–192 (GRPNVGKS), 232–236 (DTAGL), and 297–300 (NKWD) each bind GTP. In terms of domain architecture, KH-like spans 353 to 437 (AHIPTPKLTR…PLRVEFRTGH (85 aa)). Residues 434–468 (RTGHNPYAGKKAPPLTEEEARRAHSRRRRNRKKYG) are disordered. Basic residues predominate over residues 456 to 468 (AHSRRRRNRKKYG).

Belongs to the TRAFAC class TrmE-Era-EngA-EngB-Septin-like GTPase superfamily. EngA (Der) GTPase family. Associates with the 50S ribosomal subunit.

GTPase that plays an essential role in the late steps of ribosome biogenesis. The sequence is that of GTPase Der from Nitrosomonas eutropha (strain DSM 101675 / C91 / Nm57).